We begin with the raw amino-acid sequence, 542 residues long: Dihydropyrimidinase (542 aa).

The Zn(2+) site is built by His-62, His-64, and Lys-167. Lys-167 bears the N6-carboxylysine mark. Tyr-172 lines the substrate pocket. Positions 199 and 255 each coordinate Zn(2+). Ser-331 provides a ligand contact to substrate. A Zn(2+)-binding site is contributed by Asp-358. A substrate-binding site is contributed by Asn-392.

This sequence belongs to the metallo-dependent hydrolases superfamily. Hydantoinase/dihydropyrimidinase family. Homotetramer. Zn(2+) is required as a cofactor. Post-translationally, carboxylation allows a single lysine to coordinate two zinc ions.

It carries out the reaction 5,6-dihydrouracil + H2O = 3-(carbamoylamino)propanoate + H(+). Functionally, catalyzes the second step of the reductive pyrimidine degradation, the reversible hydrolytic ring opening of dihydropyrimidines. Can catalyze the ring opening of 5,6-dihydrouracil to N-carbamyl-alanine and of 5,6-dihydrothymine to N-carbamyl-amino isobutyrate. In Lachancea kluyveri (strain ATCC 58438 / CBS 3082 / BCRC 21498 / NBRC 1685 / JCM 7257 / NCYC 543 / NRRL Y-12651) (Yeast), this protein is Dihydropyrimidinase (PYD2).